Reading from the N-terminus, the 455-residue chain is tRNA-2-methylthio-N(6)-dimethylallyladenosine synthase (455 aa).

An MTTase N-terminal domain is found at 3–117; that stretch reads KGLYIESYGC…LPELIMKATR (115 aa). [4Fe-4S] cluster-binding residues include Cys12, Cys48, Cys80, Cys155, Cys159, and Cys162. The Radical SAM core domain occupies 141 to 375; it reads VSRGVSAFVS…LLTQQRLFTK (235 aa).

This sequence belongs to the methylthiotransferase family. MiaB subfamily. Monomer. It depends on [4Fe-4S] cluster as a cofactor.

The protein resides in the cytoplasm. The enzyme catalyses N(6)-dimethylallyladenosine(37) in tRNA + (sulfur carrier)-SH + AH2 + 2 S-adenosyl-L-methionine = 2-methylsulfanyl-N(6)-dimethylallyladenosine(37) in tRNA + (sulfur carrier)-H + 5'-deoxyadenosine + L-methionine + A + S-adenosyl-L-homocysteine + 2 H(+). Functionally, catalyzes the methylthiolation of N6-(dimethylallyl)adenosine (i(6)A), leading to the formation of 2-methylthio-N6-(dimethylallyl)adenosine (ms(2)i(6)A) at position 37 in tRNAs that read codons beginning with uridine. The polypeptide is tRNA-2-methylthio-N(6)-dimethylallyladenosine synthase (Anaplasma marginale (strain St. Maries)).